The following is a 361-amino-acid chain: 5-formaminoimidazole-4-carboxamide-1-(beta)-D-ribofuranosyl 5'-monophosphate synthetase (361 aa).

His-27 and Ser-94 together coordinate 5-amino-1-(5-phospho-beta-D-ribosyl)imidazole-4-carboxamide. The ATP-grasp domain occupies 116-348; it reads RAILRWEAER…MGQRIAREIK (233 aa). ATP contacts are provided by residues 146-208 and Glu-230; that span reads PDDI…ANYC. Asn-258 contacts 5-amino-1-(5-phospho-beta-D-ribosyl)imidazole-4-carboxamide. Mg(2+)-binding residues include Gln-297 and Glu-310.

The protein belongs to the phosphohexose mutase family. Mg(2+) serves as cofactor. Requires Mn(2+) as cofactor.

The enzyme catalyses 5-amino-1-(5-phospho-beta-D-ribosyl)imidazole-4-carboxamide + formate + ATP = 5-formamido-1-(5-phospho-D-ribosyl)imidazole-4-carboxamide + ADP + phosphate. Its pathway is purine metabolism; IMP biosynthesis via de novo pathway; 5-formamido-1-(5-phospho-D-ribosyl)imidazole-4-carboxamide from 5-amino-1-(5-phospho-D-ribosyl)imidazole-4-carboxamide (formate route): step 1/1. In terms of biological role, catalyzes the ATP- and formate-dependent formylation of 5-aminoimidazole-4-carboxamide-1-beta-d-ribofuranosyl 5'-monophosphate (AICAR) to 5-formaminoimidazole-4-carboxamide-1-beta-d-ribofuranosyl 5'-monophosphate (FAICAR) in the absence of folates. This Methanococcus maripaludis (strain C7 / ATCC BAA-1331) protein is 5-formaminoimidazole-4-carboxamide-1-(beta)-D-ribofuranosyl 5'-monophosphate synthetase.